The following is a 170-amino-acid chain: ATP synthase subunit b (170 aa).

A helical membrane pass occupies residues 15–37 (FNLFETNILNWAVVIFGLYKFLP). Residues 72–98 (AKKDLSSAEEKASQIKADSLKRSESIR) form a disordered region.

The protein belongs to the ATPase B chain family. As to quaternary structure, F-type ATPases have 2 components, F(1) - the catalytic core - and F(0) - the membrane proton channel. F(1) has five subunits: alpha(3), beta(3), gamma(1), delta(1), epsilon(1). F(0) has four main subunits: a(1), b(1), b'(1) and c(10-14). The alpha and beta chains form an alternating ring which encloses part of the gamma chain. F(1) is attached to F(0) by a central stalk formed by the gamma and epsilon chains, while a peripheral stalk is formed by the delta, b and b' chains.

It localises to the cellular thylakoid membrane. F(1)F(0) ATP synthase produces ATP from ADP in the presence of a proton or sodium gradient. F-type ATPases consist of two structural domains, F(1) containing the extramembraneous catalytic core and F(0) containing the membrane proton channel, linked together by a central stalk and a peripheral stalk. During catalysis, ATP synthesis in the catalytic domain of F(1) is coupled via a rotary mechanism of the central stalk subunits to proton translocation. Functionally, component of the F(0) channel, it forms part of the peripheral stalk, linking F(1) to F(0). The polypeptide is ATP synthase subunit b (Prochlorococcus marinus (strain MIT 9215)).